The primary structure comprises 505 residues: Cysteine--tRNA ligase (505 aa).

A Zn(2+)-binding site is contributed by Cys-33. Residues 35 to 45 carry the 'HIGH' region motif; sequence PTVYDFAHIGN. Zn(2+)-binding residues include Cys-229, His-268, and Glu-272. The 'KMSKS' region motif lies at 301-305; sequence KMSKS. Lys-304 contacts ATP.

The protein belongs to the class-I aminoacyl-tRNA synthetase family. In terms of assembly, monomer. Zn(2+) is required as a cofactor.

It localises to the cytoplasm. The catalysed reaction is tRNA(Cys) + L-cysteine + ATP = L-cysteinyl-tRNA(Cys) + AMP + diphosphate. The polypeptide is Cysteine--tRNA ligase (Brucella anthropi (strain ATCC 49188 / DSM 6882 / CCUG 24695 / JCM 21032 / LMG 3331 / NBRC 15819 / NCTC 12168 / Alc 37) (Ochrobactrum anthropi)).